The sequence spans 369 residues: Aminomethyltransferase (369 aa).

It belongs to the GcvT family. The glycine cleavage system is composed of four proteins: P, T, L and H.

It catalyses the reaction N(6)-[(R)-S(8)-aminomethyldihydrolipoyl]-L-lysyl-[protein] + (6S)-5,6,7,8-tetrahydrofolate = N(6)-[(R)-dihydrolipoyl]-L-lysyl-[protein] + (6R)-5,10-methylene-5,6,7,8-tetrahydrofolate + NH4(+). Functionally, the glycine cleavage system catalyzes the degradation of glycine. In Alkaliphilus metalliredigens (strain QYMF), this protein is Aminomethyltransferase.